The chain runs to 91 residues: Large ribosomal subunit protein bL27 (91 aa).

Positions 1 to 22 (MAHKKGQGSSRNGRDSNPQYRG) are disordered. The segment covering 7 to 19 (QGSSRNGRDSNPQ) has biased composition (polar residues).

Belongs to the bacterial ribosomal protein bL27 family.

In Myxococcus xanthus (strain DK1622), this protein is Large ribosomal subunit protein bL27.